The chain runs to 381 residues: E3 ubiquitin-protein ligase Fancl (381 aa).

A UBC-RWD region (URD) region spans residues Asn-110 to Pro-293. The RING-CH-type; degenerate zinc-finger motif lies at Glu-303 to Ser-374. Residues Cys-311, Cys-314, Cys-329, Cys-334, His-339, Cys-342, Cys-364, and Cys-367 each contribute to the Zn(2+) site.

Interacts (via C-terminus) with FANCI and Fancd2.

Its subcellular location is the nucleus. The catalysed reaction is S-ubiquitinyl-[E2 ubiquitin-conjugating enzyme]-L-cysteine + [acceptor protein]-L-lysine = [E2 ubiquitin-conjugating enzyme]-L-cysteine + N(6)-ubiquitinyl-[acceptor protein]-L-lysine.. It functions in the pathway protein modification; protein ubiquitination. Ubiquitin ligase protein that mediates monoubiquitination of Fancd2. Ubiquitination of Fancd2 is stimulated by ionising radiation. Together with Fancd2, and probably FANCI, involved in DNA repair of damage caused by agents that induce interstrand cross-links but not agents that cause double strand breaks. This Drosophila melanogaster (Fruit fly) protein is E3 ubiquitin-protein ligase Fancl.